Reading from the N-terminus, the 140-residue chain is Small ribosomal subunit protein uS12 (140 aa).

Asp102 is modified (3-methylthioaspartic acid). Residues 121 to 140 (ANRQQSRSKYGAKKPKAAKK) form a disordered region. Residues 130-140 (YGAKKPKAAKK) show a composition bias toward basic residues.

The protein belongs to the universal ribosomal protein uS12 family. Part of the 30S ribosomal subunit. Contacts proteins S8 and S17. May interact with IF1 in the 30S initiation complex.

Its function is as follows. With S4 and S5 plays an important role in translational accuracy. Functionally, interacts with and stabilizes bases of the 16S rRNA that are involved in tRNA selection in the A site and with the mRNA backbone. Located at the interface of the 30S and 50S subunits, it traverses the body of the 30S subunit contacting proteins on the other side and probably holding the rRNA structure together. The combined cluster of proteins S8, S12 and S17 appears to hold together the shoulder and platform of the 30S subunit. This is Small ribosomal subunit protein uS12 from Alkaliphilus oremlandii (strain OhILAs) (Clostridium oremlandii (strain OhILAs)).